A 514-amino-acid chain; its full sequence is MKLVTSEEIKRLEERLEREYSIPPILLMENAASFLFSFLKEKFEDIENRKIAILCGPGNNGGDGVALARYLYSNGIRKITIFSYLWGKKISDLLKIQLGLLKNLVEIKDILQDYTELKEYELIVDGIFGIGLKREIDDDLKKIFRYINNLGKKIISIDIPSGINSDTGEIMGEALRADYVLTMFLPKVGLFETGAVDYVGEVIVGRLGIPIEIVNDIVESNIHLVDWELLKDIVRIPSKGVHKGKKGKVLIIGGSFRYTGAPILSALSALRTGAGMVYLAVPEKISMVYRGNYPEIIYIPLKDKDGYISYDNLGYILEIIETYGIEAVAIGPGIGINEDVRRLVQDFLRKVDKKVVVDADALSFVKDILGDISGKDVVFTPHYGEMSRIVEESVETISKKRVEIGRNFVERYKLNLIIKGPNSLFFDPKNHVYVNPFADFLLATAGSGDVLTGIIAGFSAQGYSLKEACILGNFVHGYSSVIWKKYKGSVGLTASDIIKILPLAIDEVIRRRNV.

Positions 1-218 (MKLVTSEEIK…IPIEIVNDIV (218 aa)) are NAD(P)H-hydrate epimerase. One can recognise a YjeF N-terminal domain in the interval 9 to 215 (IKRLEERLER…RLGIPIEIVN (207 aa)). Residues 59 to 63 (NNGGD) form an NADPHX 1; for epimerase activity region. K(+) is bound by residues asparagine 60 and aspartate 125. Positions 129–135 (GIGLKRE) are NADPHX 1; for epimerase activity. Aspartate 158 contributes to the (6S)-NADPHX binding site. Residue serine 161 participates in K(+) binding. The YjeF C-terminal domain maps to 226–508 (DWELLKDIVR…KILPLAIDEV (283 aa)). Residues 226-514 (DWELLKDIVR…IDEVIRRRNV (289 aa)) are ADP-dependent (S)-NAD(P)H-hydrate dehydratase. Glycine 333 is a binding site for (6S)-NADPHX. An NADPHX 2; for dehydratase activity region spans residues 382–388 (HYGEMSR). ADP-binding positions include 419-423 (KGPNS) and 439-448 (DFLLATAGSG). Aspartate 449 contributes to the (6S)-NADPHX binding site.

This sequence in the N-terminal section; belongs to the NnrE/AIBP family. In the C-terminal section; belongs to the NnrD/CARKD family. K(+) serves as cofactor.

It catalyses the reaction (6S)-NADHX + ADP = AMP + phosphate + NADH + H(+). The catalysed reaction is (6S)-NADPHX + ADP = AMP + phosphate + NADPH + H(+). The enzyme catalyses (6R)-NADHX = (6S)-NADHX. It carries out the reaction (6R)-NADPHX = (6S)-NADPHX. Its function is as follows. Bifunctional enzyme that catalyzes the epimerization of the S- and R-forms of NAD(P)HX and the dehydration of the S-form of NAD(P)HX at the expense of ADP, which is converted to AMP. This allows the repair of both epimers of NAD(P)HX, a damaged form of NAD(P)H that is a result of enzymatic or heat-dependent hydration. The chain is Bifunctional NAD(P)H-hydrate repair enzyme Nnr (nnr) from Dictyoglomus turgidum (strain DSM 6724 / Z-1310).